A 122-amino-acid polypeptide reads, in one-letter code: Uterine plasmin/trypsin inhibitor (122 aa).

The N-terminal stretch at methionine 1–serine 20 is a signal peptide. A propeptide spanning residues threonine 21 to leucine 29 is cleaved from the precursor. Residues cysteine 38–cysteine 88 form the BPTI/Kunitz inhibitor domain. Cystine bridges form between cysteine 38–cysteine 88, cysteine 47–cysteine 71, and cysteine 63–cysteine 84.

As to expression, expressed only in the uterus and the endometrium.

Inhibitor of plasmin and trypsin. Also has a weak affinity for chymotrypsin. Could serve to neutralize the activities of one or more serine proteinases generated by the proliferating trophoblast during the formation of the noninvasive placenta. This Sus scrofa (Pig) protein is Uterine plasmin/trypsin inhibitor.